A 348-amino-acid chain; its full sequence is D-alanine--D-alanine ligase (348 aa).

One can recognise an ATP-grasp domain in the interval Lys132–Thr334. Leu162–Glu217 is a binding site for ATP. Mg(2+)-binding residues include Asp288, Glu301, and Asn303.

Belongs to the D-alanine--D-alanine ligase family. The cofactor is Mg(2+). Mn(2+) is required as a cofactor.

The protein localises to the cytoplasm. It carries out the reaction 2 D-alanine + ATP = D-alanyl-D-alanine + ADP + phosphate + H(+). Its pathway is cell wall biogenesis; peptidoglycan biosynthesis. In terms of biological role, cell wall formation. This chain is D-alanine--D-alanine ligase, found in Streptococcus pyogenes serotype M12 (strain MGAS2096).